The primary structure comprises 192 residues: Nucleoside triphosphate pyrophosphatase (192 aa).

Catalysis depends on Asp73, which acts as the Proton acceptor.

This sequence belongs to the Maf family. The cofactor is a divalent metal cation.

It is found in the cytoplasm. The enzyme catalyses a ribonucleoside 5'-triphosphate + H2O = a ribonucleoside 5'-phosphate + diphosphate + H(+). It catalyses the reaction a 2'-deoxyribonucleoside 5'-triphosphate + H2O = a 2'-deoxyribonucleoside 5'-phosphate + diphosphate + H(+). Nucleoside triphosphate pyrophosphatase. May have a dual role in cell division arrest and in preventing the incorporation of modified nucleotides into cellular nucleic acids. This Ehrlichia ruminantium (strain Gardel) protein is Nucleoside triphosphate pyrophosphatase.